The chain runs to 883 residues: Phosphoenolpyruvate carboxylase (883 aa).

Active-site residues include histidine 138 and lysine 546.

This sequence belongs to the PEPCase type 1 family. Requires Mg(2+) as cofactor.

The enzyme catalyses oxaloacetate + phosphate = phosphoenolpyruvate + hydrogencarbonate. In terms of biological role, forms oxaloacetate, a four-carbon dicarboxylic acid source for the tricarboxylic acid cycle. The polypeptide is Phosphoenolpyruvate carboxylase (Salmonella gallinarum (strain 287/91 / NCTC 13346)).